The primary structure comprises 445 residues: UNC93-like protein MFSD11 (445 aa).

Residues 8–28 form a helical membrane-spanning segment; it reads LLNIIILGIGFMFMFTAFQTS. Asparagine 40 carries an N-linked (GlcNAc...) asparagine glycan. 4 helical membrane-spanning segments follow: residues 53-73, 74-94, 98-118, and 138-158; these read AIIY…VAVI, GCQM…AMFI, TWSF…LWTA, and IFWA…YLAW. A glycan (N-linked (GlcNAc...) asparagine) is linked at asparagine 163. 7 consecutive transmembrane segments (helical) span residues 170–190, 239–259, 277–297, 309–329, 345–365, 385–405, and 415–435; these read RTVF…FFLI, MLLL…YSGV, LIGL…GLFG, PVVI…YLYM, AFIN…GLGD, APAF…AFFY, and LLIL…VEWG.

This sequence belongs to the unc-93 family.

It localises to the membrane. In Xenopus tropicalis (Western clawed frog), this protein is UNC93-like protein MFSD11 (mfsd11).